We begin with the raw amino-acid sequence, 120 residues long: Seripauperin-2 (120 aa).

A helical membrane pass occupies residues 7–24 (IAAGVAAIAATASATTTL).

The protein belongs to the SRP1/TIP1 family. Seripauperin subfamily.

It is found in the membrane. The protein is Seripauperin-2 (PAU2) of Saccharomyces cerevisiae (strain ATCC 204508 / S288c) (Baker's yeast).